A 551-amino-acid chain; its full sequence is Palatinase (551 aa).

Asp201 acts as the Nucleophile in catalysis. The Proton donor role is filled by Glu243.

The protein belongs to the glycosyl hydrolase 13 family.

It catalyses the reaction 6-O-alpha-D-glucopyranosyl-D-fructose + H2O = alpha-D-glucose + D-fructose. Its pathway is glycan degradation; palatinose degradation. In terms of biological role, catalyzes the hydrolysis of palatinose. Shows a strict specificity toward palatinose, and cannot release glucose from the disaccharides sucrose, maltose, trehalose and melibiose. Involved in the degradation of palatinose, a sucrose isomer that is formed as a reserve material under conditions of excess carbon availability, sequestered in a form unavailable to competitors such as fungi or the host plant, and whose consumption appears to be postponed until the preferentially metabolized carbon source (e.g. sucrose) is depleted. This is Palatinase from Erwinia rhapontici (Pectobacterium rhapontici).